Consider the following 367-residue polypeptide: Alginate lyase (367 aa).

The N-terminal stretch at 1–27 (MKTSHLIRIALPGALAAALLASQVSQA) is a signal peptide. Substrate-binding positions include 65 to 66 (SK), 138 to 139 (HT), and Tyr-256.

Belongs to the polysaccharide lyase 5 family.

It is found in the periplasm. The enzyme catalyses Eliminative cleavage of alginate to give oligosaccharides with 4-deoxy-alpha-L-erythro-hex-4-enuronosyl groups at their non-reducing ends and beta-D-mannuronate at their reducing end.. Functionally, catalyzes the depolymerization of alginate by cleaving the beta-1,4 glycosidic bond between two adjacent sugar residues via a beta-elimination mechanism. May serve to degrade mislocalized alginate that is trapped in the periplasmic space. This chain is Alginate lyase, found in Pseudomonas aeruginosa (strain LESB58).